The primary structure comprises 1170 residues: Short transient receptor potential channel 2 (1170 aa).

Topologically, residues 1–627 (MLMSLTDSKE…GWRGSTTIWK (627 aa)) are cytoplasmic. Disordered stretches follow at residues 64 to 113 (SLSD…QTST), 142 to 231 (AHKA…QATG), and 322 to 342 (ESGSDPSGAGPGGPLRNVEES). Residues 74 to 85 (SPGSSGLNQNSS) show a composition bias toward polar residues. Over residues 158 to 177 (GEPDSSHPERAEPRAEEPNR) the composition is skewed to basic and acidic residues. ANK repeat units lie at residues 300-329 (KFPPTLLRAIQEGQLGLVQQLLESGSDPSG), 346-376 (SWREALNLAIRLGHEVITDVLLANVKFDFRQ), 377-405 (IHEALLVAVDTNQPAVVRRLLARLEREKG), and 429-458 (PGVTPLTLACQKDLYEIAQLLMDQGHTIAR). Residues 628–648 (LFVAFLIFLTMPFLCIGYWLA) traverse the membrane as a helical segment. The Extracellular portion of the chain corresponds to 649-658 (PKSRLGRLLK). The chain crosses the membrane as a helical span at residues 659 to 679 (IPVLKFLLHSASYLWFLIFLL). Residues 680–701 (GESLVMETQLSTFKGRSQSVWE) lie on the Cytoplasmic side of the membrane. The chain crosses the membrane as a helical span at residues 702-722 (TSLHMIWVTGFLWFECKEVWI). At 723–737 (EGLRSYLLDWWNFLD) the chain is on the extracellular side. The chain crosses the membrane as a helical span at residues 738 to 758 (VVILSLYLASFALRLLLAGLA). The Cytoplasmic segment spans residues 759–788 (YMHCRDASDSSTCRYFTTAERSEWRTEDPQ). A helical transmembrane segment spans residues 789–809 (FLAEVLFAVTSMLSFTRLAYI). Residues 810-832 (LPAHESLGTLQISIGKMIDDMIR) lie on the Extracellular side of the membrane. The chain crosses the membrane as a helical span at residues 833–853 (FMFILMIILTAFLCGLNNIYV). At 854–898 (PYQETEKLGNFNETFQFLFWTMFGMEEHSVVDMPQFLVPEFVGRA) the chain is on the cytoplasmic side. The chain crosses the membrane as a helical span at residues 899–919 (MYGIFTIVMVIVLLNMLIAMI). The Extracellular portion of the chain corresponds to 920–1170 (TNSFQKIEDD…GEDLETKGES (251 aa)). Residues 1030-1068 (RREFEETRRKDLGNRLTELTKTVSRLQSEVASVQKTVAA) are a coiled coil. The disordered stretch occupies residues 1118–1170 (LEDSLDATGEAGTPASGESSSSSSAHVLVHREQEAEGAGDLPLGEDLETKGES).

The protein belongs to the transient receptor (TC 1.A.4) family. STrpC subfamily. TRPC2 sub-subfamily. In terms of tissue distribution, expressed exclusively in vomeronasal organ neurons (sensory microvilli).

It is found in the membrane. Functionally, thought to form a receptor-activated calcium permeant cation channel. Probably is operated by a phosphatidylinositol second messenger system activated by receptor tyrosine kinases or G-protein coupled receptors. Is not activated by intracellular calcium store depletion. This chain is Short transient receptor potential channel 2 (Trpc2), found in Rattus norvegicus (Rat).